A 150-amino-acid polypeptide reads, in one-letter code: Ubiquitin-conjugating enzyme E2 3 (150 aa).

The region spanning 4–150 (PAKKRLMWDF…VIEIVEQSYV (147 aa)) is the UBC core domain. Cysteine 88 functions as the Glycyl thioester intermediate in the catalytic mechanism.

This sequence belongs to the ubiquitin-conjugating enzyme family. As to expression, expressed in all tissues examined. Lower levels found in leaves.

It carries out the reaction S-ubiquitinyl-[E1 ubiquitin-activating enzyme]-L-cysteine + [E2 ubiquitin-conjugating enzyme]-L-cysteine = [E1 ubiquitin-activating enzyme]-L-cysteine + S-ubiquitinyl-[E2 ubiquitin-conjugating enzyme]-L-cysteine.. It functions in the pathway protein modification; protein ubiquitination. Functionally, accepts the ubiquitin from the E1 complex and catalyzes its covalent attachment to other proteins. The chain is Ubiquitin-conjugating enzyme E2 3 (UBC3) from Arabidopsis thaliana (Mouse-ear cress).